The primary structure comprises 762 residues: Cell surface protein (762 aa).

Positions 1–26 (MKNLKKLIAVVSTFALVFSAMAVGFA) are cleaved as a signal peptide. SLH domains lie at 27-90 (ATTP…EMAK), 92-155 (EKSA…WPYG), and 156-204 (YLAK…KEVL). O-linked (Glc...) tyrosine glycans are attached at residues tyrosine 297, tyrosine 516, tyrosine 520, and tyrosine 632.

Glycosylated; contains 8% carbohydrates, which correspond to about 40 to 50 sugar molecules per monomer. O-linked glycans consist of Glc, GalNAc and GlcNAc.

It localises to the secreted. Its subcellular location is the cell wall. It is found in the S-layer. Functionally, the S-layer is a paracrystalline mono-layered assembly of proteins which coat the surface of bacteria. In Thermoanaerobacter kivui (Acetogenium kivui), this protein is Cell surface protein.